The chain runs to 450 residues: UDP-N-acetylmuramoylalanine--D-glutamate ligase (450 aa).

119 to 125 lines the ATP pocket; sequence GSNGKTT.

Belongs to the MurCDEF family.

It localises to the cytoplasm. The catalysed reaction is UDP-N-acetyl-alpha-D-muramoyl-L-alanine + D-glutamate + ATP = UDP-N-acetyl-alpha-D-muramoyl-L-alanyl-D-glutamate + ADP + phosphate + H(+). The protein operates within cell wall biogenesis; peptidoglycan biosynthesis. Cell wall formation. Catalyzes the addition of glutamate to the nucleotide precursor UDP-N-acetylmuramoyl-L-alanine (UMA). The sequence is that of UDP-N-acetylmuramoylalanine--D-glutamate ligase from Bacillus mycoides (strain KBAB4) (Bacillus weihenstephanensis).